A 243-amino-acid chain; its full sequence is Probable 6-phosphogluconolactonase (243 aa).

This sequence belongs to the glucosamine/galactosamine-6-phosphate isomerase family. 6-phosphogluconolactonase subfamily.

The enzyme catalyses 6-phospho-D-glucono-1,5-lactone + H2O = 6-phospho-D-gluconate + H(+). It functions in the pathway carbohydrate degradation; pentose phosphate pathway; D-ribulose 5-phosphate from D-glucose 6-phosphate (oxidative stage): step 2/3. Functionally, hydrolysis of 6-phosphogluconolactone to 6-phosphogluconate. The polypeptide is Probable 6-phosphogluconolactonase (Drosophila melanogaster (Fruit fly)).